The primary structure comprises 249 residues: Proteasome subunit alpha type-7-1A (249 aa).

The protein belongs to the peptidase T1A family. As to quaternary structure, the 26S proteasome consists of a 20S proteasome core and two 19S regulatory subunits. The 20S proteasome core is composed of 28 subunits that are arranged in four stacked rings, resulting in a barrel-shaped structure. The two end rings are each formed by seven alpha subunits, and the two central rings are each formed by seven beta subunits. The catalytic chamber with the active sites is on the inside of the barrel. Testis specific.

It is found in the cytoplasm. The protein localises to the nucleus. The proteasome is a multicatalytic proteinase complex which is characterized by its ability to cleave peptides with Arg, Phe, Tyr, Leu, and Glu adjacent to the leaving group at neutral or slightly basic pH. The proteasome has an ATP-dependent proteolytic activity. In Drosophila melanogaster (Fruit fly), this protein is Proteasome subunit alpha type-7-1A (Prosalpha4T1).